The chain runs to 481 residues: Glutamate--tRNA ligase (481 aa).

The short motif at 28–38 (PSPTGFLHLGG) is the 'HIGH' region element. Basic and acidic residues predominate over residues 139–148 (RYDGTWRPEP). The interval 139–159 (RYDGTWRPEPGKTLPPVPADR) is disordered. The short motif at 260-264 (KLSKR) is the 'KMSKS' region element. Position 263 (Lys-263) interacts with ATP.

The protein belongs to the class-I aminoacyl-tRNA synthetase family. Glutamate--tRNA ligase type 1 subfamily. Monomer.

It localises to the cytoplasm. The catalysed reaction is tRNA(Glu) + L-glutamate + ATP = L-glutamyl-tRNA(Glu) + AMP + diphosphate. Functionally, catalyzes the attachment of glutamate to tRNA(Glu) in a two-step reaction: glutamate is first activated by ATP to form Glu-AMP and then transferred to the acceptor end of tRNA(Glu). The polypeptide is Glutamate--tRNA ligase (Bordetella parapertussis (strain 12822 / ATCC BAA-587 / NCTC 13253)).